Here is a 130-residue protein sequence, read N- to C-terminus: UPF0102 protein TDE_2303 (130 aa).

The protein belongs to the UPF0102 family.

The chain is UPF0102 protein TDE_2303 from Treponema denticola (strain ATCC 35405 / DSM 14222 / CIP 103919 / JCM 8153 / KCTC 15104).